The sequence spans 200 residues: NAD(P)H dehydrogenase (quinone) (200 aa).

The region spanning 4 to 191 (LLVLYYSMYG…TIARFQGEHV (188 aa)) is the Flavodoxin-like domain. FMN contacts are provided by residues 10–15 (SMYGHV) and 79–81 (TRF). NAD(+) is bound at residue Y12. Substrate is bound at residue W99. FMN-binding positions include 114–120 (STASQHG) and H135.

The protein belongs to the WrbA family. FMN serves as cofactor.

It carries out the reaction a quinone + NADH + H(+) = a quinol + NAD(+). The enzyme catalyses a quinone + NADPH + H(+) = a quinol + NADP(+). The protein is NAD(P)H dehydrogenase (quinone) of Nitrosococcus oceani (strain ATCC 19707 / BCRC 17464 / JCM 30415 / NCIMB 11848 / C-107).